Here is a 279-residue protein sequence, read N- to C-terminus: Dermonecrotic toxin LspiSicTox-betaIE3ii (279 aa).

The active site involves histidine 5. The Mg(2+) site is built by glutamate 25 and aspartate 27. Histidine 41 serves as the catalytic Nucleophile. Disulfide bonds link cysteine 45-cysteine 51 and cysteine 47-cysteine 190. Aspartate 85 contributes to the Mg(2+) binding site.

The protein belongs to the arthropod phospholipase D family. Class II subfamily. It depends on Mg(2+) as a cofactor. As to expression, expressed by the venom gland.

It is found in the secreted. The catalysed reaction is an N-(acyl)-sphingosylphosphocholine = an N-(acyl)-sphingosyl-1,3-cyclic phosphate + choline. It catalyses the reaction an N-(acyl)-sphingosylphosphoethanolamine = an N-(acyl)-sphingosyl-1,3-cyclic phosphate + ethanolamine. The enzyme catalyses a 1-acyl-sn-glycero-3-phosphocholine = a 1-acyl-sn-glycero-2,3-cyclic phosphate + choline. It carries out the reaction a 1-acyl-sn-glycero-3-phosphoethanolamine = a 1-acyl-sn-glycero-2,3-cyclic phosphate + ethanolamine. Its function is as follows. Dermonecrotic toxins cleave the phosphodiester linkage between the phosphate and headgroup of certain phospholipids (sphingolipid and lysolipid substrates), forming an alcohol (often choline) and a cyclic phosphate. This toxin acts on sphingomyelin (SM). It may also act on ceramide phosphoethanolamine (CPE), lysophosphatidylcholine (LPC) and lysophosphatidylethanolamine (LPE), but not on lysophosphatidylserine (LPS), and lysophosphatidylglycerol (LPG). It acts by transphosphatidylation, releasing exclusively cyclic phosphate products as second products. Induces dermonecrosis, hemolysis, increased vascular permeability, edema, inflammatory response, and platelet aggregation. The chain is Dermonecrotic toxin LspiSicTox-betaIE3ii from Loxosceles spinulosa (Recluse spider).